The sequence spans 85 residues: Large ribosomal subunit protein bL27 (85 aa).

Positions 1–20 (MATKKAGGSTRNGRDSEAKR) are disordered.

It belongs to the bacterial ribosomal protein bL27 family.

This Histophilus somni (strain 129Pt) (Haemophilus somnus) protein is Large ribosomal subunit protein bL27.